The sequence spans 212 residues: Thymidylate kinase (212 aa).

Position 10–17 (10–17 (GLEGAGKS)) interacts with ATP.

Belongs to the thymidylate kinase family.

The enzyme catalyses dTMP + ATP = dTDP + ADP. Phosphorylation of dTMP to form dTDP in both de novo and salvage pathways of dTTP synthesis. This is Thymidylate kinase from Vibrio cholerae serotype O1 (strain ATCC 39541 / Classical Ogawa 395 / O395).